Reading from the N-terminus, the 885-residue chain is Aconitate hydratase A (885 aa).

The [4Fe-4S] cluster site is built by Cys-425, Cys-491, and Cys-494.

The protein belongs to the aconitase/IPM isomerase family. As to quaternary structure, monomer. [4Fe-4S] cluster is required as a cofactor.

It catalyses the reaction citrate = D-threo-isocitrate. It carries out the reaction (2S,3R)-3-hydroxybutane-1,2,3-tricarboxylate = 2-methyl-cis-aconitate + H2O. It participates in carbohydrate metabolism; tricarboxylic acid cycle; isocitrate from oxaloacetate: step 2/2. It functions in the pathway organic acid metabolism; propanoate degradation. Involved in the catabolism of short chain fatty acids (SCFA) via the tricarboxylic acid (TCA)(acetyl degradation route) and probably the 2-methylcitrate cycle I (propionate degradation route). Catalyzes the reversible isomerization of citrate to isocitrate via cis-aconitate. Could catalyze the hydration of 2-methyl-cis-aconitate to yield (2R,3S)-2-methylisocitrate. The apo form of AcnA functions as a RNA-binding regulatory protein. In Rickettsia bellii (strain RML369-C), this protein is Aconitate hydratase A (acnA).